A 361-amino-acid chain; its full sequence is Probable dual-specificity RNA methyltransferase RlmN (361 aa).

Residue Glu-91 is the Proton acceptor of the active site. The Radical SAM core domain maps to 97 to 329; the sequence is QHYGLSVCVT…KKKGVNCVVR (233 aa). Cys-104 and Cys-340 are joined by a disulfide. [4Fe-4S] cluster is bound by residues Cys-111, Cys-115, and Cys-118. S-adenosyl-L-methionine is bound by residues 163–164, Ser-195, 218–220, and Asn-296; these read GE and SLH. Cys-340 functions as the S-methylcysteine intermediate in the catalytic mechanism.

This sequence belongs to the radical SAM superfamily. RlmN family. Requires [4Fe-4S] cluster as cofactor.

It is found in the cytoplasm. It carries out the reaction adenosine(2503) in 23S rRNA + 2 reduced [2Fe-2S]-[ferredoxin] + 2 S-adenosyl-L-methionine = 2-methyladenosine(2503) in 23S rRNA + 5'-deoxyadenosine + L-methionine + 2 oxidized [2Fe-2S]-[ferredoxin] + S-adenosyl-L-homocysteine. It catalyses the reaction adenosine(37) in tRNA + 2 reduced [2Fe-2S]-[ferredoxin] + 2 S-adenosyl-L-methionine = 2-methyladenosine(37) in tRNA + 5'-deoxyadenosine + L-methionine + 2 oxidized [2Fe-2S]-[ferredoxin] + S-adenosyl-L-homocysteine. Functionally, specifically methylates position 2 of adenine 2503 in 23S rRNA and position 2 of adenine 37 in tRNAs. This Streptococcus pneumoniae serotype 4 (strain ATCC BAA-334 / TIGR4) protein is Probable dual-specificity RNA methyltransferase RlmN.